The chain runs to 831 residues: Probable inactive serine/threonine-protein kinase DDB_G0274613 (831 aa).

Residues 9–63 (CSICSEEVIDFAAIFSSNKKFGDKACKHNFCVSCLTYLMEYNTRNKKALCCPICR) form an RING-type zinc finger. The stretch at 83–348 (RKLSSAQIFL…LEEMKLLYQF (266 aa)) forms a coiled coil. In terms of domain architecture, Protein kinase spans 414–787 (QIHKVSIGNG…ANQAAFHKFF (374 aa)). A disordered region spans residues 657–703 (NNNNNNNNNNNNNNNNNNNNNNNNNNNNNNNNNNNNNNNNNIESNFN).

This sequence belongs to the protein kinase superfamily. CMGC Ser/Thr protein kinase family.

The protein is Probable inactive serine/threonine-protein kinase DDB_G0274613 of Dictyostelium discoideum (Social amoeba).